The sequence spans 632 residues: MPKTFHEIPRVRPATPVLDRAATPEQLRRLGEAELEELANELRQELLYSVGRTGGHFGAGLGVIELTIALHYVYDTPDDRLVWDVGHQAYPHKILTGRRERMGTLRQKDGLAAFPRRVESEYDTFGVGHSSTSISAALGMAVAARLKGEQRKSIAVIGDGALTAGMAFEALNHAPEVGANMLVVLNDNDMSISRNVGGLSNYLAKILSSRTYSSMREGSKKILSRLPGAWEIARRTEEYAKGMLVPGTLFEELGWNYIGPIDGHDLPTLIATLRNMRDLDGPQFLHVVTKKGKGFAPAEADPITWHAISKLEPVGAPPAPKKPTGPKYSNVFGQWLCDMAAADPRLTGITPAMKEGSDLVAFSERYPDRYFDVAIAEQHAVTLAAGMACEGLKPVVAIYSTFLQRAYDQLIHDVAVQNLDVLFAIDRAGLVGEDGPTHAGSFDLSYLRCIPGMLVMTPSDENEMRRMLTTGYHFEGPAAVRYPRGSGPNASIEPALEPLEIGKAVVRRRGSKVALLVFGVQLPEALQVGDALDATVVDMRFVKPLDEALLRELAGSHELLVTVEENSIMGGAGSAVAEFLAAEGVLRPILHLGLPDYYVEHAKPSEMLAECGLDAAGIEVAVRKRLAALGKA.

Thiamine diphosphate contacts are provided by residues His-87 and 128–130; that span reads GHS. Asp-159 is a binding site for Mg(2+). Thiamine diphosphate-binding positions include 160 to 161, Asn-188, Phe-295, and Glu-377; that span reads GA. A Mg(2+)-binding site is contributed by Asn-188.

This sequence belongs to the transketolase family. DXPS subfamily. In terms of assembly, homodimer. Requires Mg(2+) as cofactor. Thiamine diphosphate serves as cofactor.

The enzyme catalyses D-glyceraldehyde 3-phosphate + pyruvate + H(+) = 1-deoxy-D-xylulose 5-phosphate + CO2. Its pathway is metabolic intermediate biosynthesis; 1-deoxy-D-xylulose 5-phosphate biosynthesis; 1-deoxy-D-xylulose 5-phosphate from D-glyceraldehyde 3-phosphate and pyruvate: step 1/1. Catalyzes the acyloin condensation reaction between C atoms 2 and 3 of pyruvate and glyceraldehyde 3-phosphate to yield 1-deoxy-D-xylulose-5-phosphate (DXP). The protein is 1-deoxy-D-xylulose-5-phosphate synthase of Stutzerimonas stutzeri (strain A1501) (Pseudomonas stutzeri).